Here is a 461-residue protein sequence, read N- to C-terminus: Complement C1r subcomponent-like protein (461 aa).

The N-terminal stretch at Met-1 to Ala-22 is a signal peptide. The CUB domain maps to Gln-23–Ala-139. Disulfide bonds link Cys-71-Cys-89 and Cys-164-Cys-197. One can recognise a Sushi domain in the interval Ala-138–Pro-199. Residues Thr-214–Glu-453 form the Peptidase S1 domain. His-252 serves as the catalytic Charge relay system. N-linked (GlcNAc...) asparagine glycosylation occurs at Asn-265. Asp-308 serves as the catalytic Charge relay system. Asn-332 carries an N-linked (GlcNAc...) asparagine glycan. 2 cysteine pairs are disulfide-bonded: Cys-371–Cys-390 and Cys-401–Cys-431. Ser-405 functions as the Charge relay system in the catalytic mechanism.

This sequence belongs to the peptidase S1 family.

It localises to the secreted. Functionally, mediates the proteolytic cleavage of HP/haptoglobin in the endoplasmic reticulum. The sequence is that of Complement C1r subcomponent-like protein (C1rl) from Rattus norvegicus (Rat).